Consider the following 317-residue polypeptide: 8-oxo-(d)GTP phosphatase (317 aa).

The Nudix hydrolase domain maps to R15–K148. Substrate contacts are provided by residues R43–Y46, D48, and K53–K55. 3 residues coordinate Mg(2+): K53, E69, and E73. A Nudix box motif is present at residues G54–G75. Residues Y89, K99, E118, and Y136 each coordinate substrate. Position 118 (E118) interacts with Mg(2+).

It belongs to the Nudix hydrolase family. Mg(2+) is required as a cofactor.

The enzyme catalyses 8-oxo-dGTP + H2O = 8-oxo-dGDP + phosphate + H(+). The catalysed reaction is 8-oxo-GTP + H2O = 8-oxo-GDP + phosphate + H(+). Catalyzes the conversion of 8-oxo-dGTP to 8-oxo-dGDP, and 8-oxo-GTP to 8-oxo-GDP. The polypeptide is 8-oxo-(d)GTP phosphatase (Mycobacterium tuberculosis (strain CDC 1551 / Oshkosh)).